We begin with the raw amino-acid sequence, 241 residues long: Leucyl/phenylalanyl-tRNA--protein transferase (241 aa).

The protein belongs to the L/F-transferase family.

It localises to the cytoplasm. It carries out the reaction N-terminal L-lysyl-[protein] + L-leucyl-tRNA(Leu) = N-terminal L-leucyl-L-lysyl-[protein] + tRNA(Leu) + H(+). It catalyses the reaction N-terminal L-arginyl-[protein] + L-leucyl-tRNA(Leu) = N-terminal L-leucyl-L-arginyl-[protein] + tRNA(Leu) + H(+). The enzyme catalyses L-phenylalanyl-tRNA(Phe) + an N-terminal L-alpha-aminoacyl-[protein] = an N-terminal L-phenylalanyl-L-alpha-aminoacyl-[protein] + tRNA(Phe). Functions in the N-end rule pathway of protein degradation where it conjugates Leu, Phe and, less efficiently, Met from aminoacyl-tRNAs to the N-termini of proteins containing an N-terminal arginine or lysine. This Neisseria meningitidis serogroup B (strain ATCC BAA-335 / MC58) protein is Leucyl/phenylalanyl-tRNA--protein transferase.